Consider the following 412-residue polypeptide: Protein png-1 (412 aa).

Zn(2+) is bound by residues Cys-150, Cys-153, Cys-182, and Cys-185. A disordered region spans residues 363–412 (AAAARGGRSSPDNKSGANMMGSPATGDIKRPIPEDAPVPDVPSLWPTYGP).

The protein belongs to the transglutaminase-like superfamily. PNGase family.

This Neurospora crassa (strain ATCC 24698 / 74-OR23-1A / CBS 708.71 / DSM 1257 / FGSC 987) protein is Protein png-1 (un-7).